The sequence spans 348 residues: Phosphoribosylformylglycinamidine cyclo-ligase (348 aa).

Belongs to the AIR synthase family.

Its subcellular location is the cytoplasm. The catalysed reaction is 2-formamido-N(1)-(5-O-phospho-beta-D-ribosyl)acetamidine + ATP = 5-amino-1-(5-phospho-beta-D-ribosyl)imidazole + ADP + phosphate + H(+). Its pathway is purine metabolism; IMP biosynthesis via de novo pathway; 5-amino-1-(5-phospho-D-ribosyl)imidazole from N(2)-formyl-N(1)-(5-phospho-D-ribosyl)glycinamide: step 2/2. In Cereibacter sphaeroides (strain KD131 / KCTC 12085) (Rhodobacter sphaeroides), this protein is Phosphoribosylformylglycinamidine cyclo-ligase.